A 287-amino-acid polypeptide reads, in one-letter code: PIH1 domain-containing protein 1 (287 aa).

Belongs to the PIH1 family.

It is found in the nucleus. Functionally, involved in the assembly of C/D box small nucleolar ribonucleoprotein (snoRNP) particles. Recruits the SWI/SNF complex to the core promoter of rRNA genes and enhances pre-rRNA transcription. Mediates interaction of TELO2 with the R2TP complex which is necessary for the stability of MTOR and SMG1. Positively regulates the assembly and activity of the mTORC1 complex. This Danio rerio (Zebrafish) protein is PIH1 domain-containing protein 1 (pih1d1).